A 152-amino-acid polypeptide reads, in one-letter code: Nucleoside diphosphate kinase A (152 aa).

K12, F60, R88, and T94 together coordinate ATP. A Glycyl lysine isopeptide (Lys-Gly) (interchain with G-Cter in ubiquitin) cross-link involves residue K100. R105 and N115 together coordinate ATP. The active-site Pros-phosphohistidine intermediate is H118. Phosphoserine occurs at positions 120 and 122. K124 is modified (N6-acetyllysine). A Phosphoserine modification is found at S125.

It belongs to the NDK family. In terms of assembly, hexamer of two different chains: An and B (A6, A5B, A4B2, A3B3, A2B4, AB5, B6). Interacts with PRUNE1. Component of the SET complex, composed of at least ANP32A, APEX1, HMGB2, NME1, SET and TREX1. Within this complex, interacts directly with SET. Also interacts with TREX1, but only following translocation to the nucleus. The cofactor is Mg(2+).

The protein resides in the cytoplasm. The protein localises to the nucleus. It catalyses the reaction a 2'-deoxyribonucleoside 5'-diphosphate + ATP = a 2'-deoxyribonucleoside 5'-triphosphate + ADP. It carries out the reaction a ribonucleoside 5'-diphosphate + ATP = a ribonucleoside 5'-triphosphate + ADP. With respect to regulation, autophosphorylation at His-118 increases serine/threonine protein kinase activity of the enzyme. Interaction with the SET complex inhibits exonuclease activity. In terms of biological role, major role in the synthesis of nucleoside triphosphates other than ATP. The ATP gamma phosphate is transferred to the NDP beta phosphate via a ping-pong mechanism, using a phosphorylated active-site intermediate. Possesses nucleoside-diphosphate kinase, serine/threonine-specific protein kinase, geranyl and farnesyl pyrophosphate kinase, histidine protein kinase and 3'-5' exonuclease activities. Involved in cell proliferation, differentiation and development, signal transduction, G protein-coupled receptor endocytosis, and gene expression. Required for neural development including neural patterning and cell fate determination. During GZMA-mediated cell death, works in concert with TREX1. NME1 nicks one strand of DNA and TREX1 removes bases from the free 3' end to enhance DNA damage and prevent DNA end reannealing and rapid repair. This chain is Nucleoside diphosphate kinase A (Nme1), found in Mus musculus (Mouse).